Reading from the N-terminus, the 849-residue chain is MQRVSFEVKDTEAEKSSSEILSGSLPSTYRNPAMENVGNAVDDGSSVKNNPKLDMQKQNGLVKWFKKCLTMVSGESKAPRLDRSKSTAGQALKGLKIISKTDGNAAWTVVEKRYLKITANTDGLLLRSKFGECIGMNSKEFALELFDALARKSHLKGDVITETELKKFWEQINDKSFDSRLITFFDLMDKDSDGRLTEDEVREIIKLSSSANHLSCIQNKADEYAAMIMEELDPDHMGYIMMESLKKLLLQAETKSVSTDINSEERKELSDMLTESLKPTRDPNHLRRWYCQLRFFVLDSWQRVWVIALWLTIMAILFAYKYIQYKNRAVYEVLGPCVCLAKGAAETLKLNMALILLPVCRNTITWLRNKTRLGVFVPFDDNLNFHKVIAVGIAIGVAIHSVSHLACDFPLLIAATPAEYMPLGKFFGEEQPKRYLHFVKSTEGITGLVMVFLMVIAFTLAMPWFRRGKLEKKLPGPLKKLASFNAFWYTHHLFVIVYILLVLHGYYIYLNKEWYKKTTWMYLAVPVALYAYERLIRAFRSSIRTVKVLKMAAYPGKVLTLQMSKPTNFKYMSGQYMFVNCPAVSPFEWHPFSITSTPQDDYLSVHIKALGDWTEAIQGVFSEVSKPPPVGDMLNGANSPRFPKIMIDGPYGAPAQDYKKYEVVLLIGLGIGATPMISIIKDIINNTETKEQLSQMEKGSPQEQQGNKETFKTRRAYFYWVTKEQGTFDWFKNIMNEIAERDKSKVIELHNHCTSVYEEGDVRSALIRMLQSLNYAKNGLDIVAGTRVMSHFARPNWKNVYKQIAMDHPGANVGVFYCGAPVLTKELRQLALEFTHKTSTRFSFHKENF.

Residues 1–17 (MQRVSFEVKDTEAEKSS) show a composition bias toward basic and acidic residues. The disordered stretch occupies residues 1 to 53 (MQRVSFEVKDTEAEKSSSEILSGSLPSTYRNPAMENVGNAVDDGSSVKNNPKL). The Cytoplasmic segment spans residues 1–303 (MQRVSFEVKD…RFFVLDSWQR (303 aa)). Over residues 18–27 (SEILSGSLPS) the composition is skewed to low complexity. 2 EF-hand-like regions span residues 118 to 128 (TANTDGLLLRS) and 153 to 164 (SHLKGDVITETE). EF-hand domains follow at residues 176–211 (SFDS…SSSA) and 220–255 (KADE…AETK). The Ca(2+) site is built by Asp-189, Asp-191, Asp-193, Arg-195, and Glu-200. Ser-270 carries the post-translational modification Phosphoserine. Residues 304–324 (VWVIALWLTIMAILFAYKYIQ) form a helical membrane-spanning segment. At 325-392 (YKNRAVYEVL…LNFHKVIAVG (68 aa)) the chain is on the extracellular side. The Ferric oxidoreductase domain maps to 342-502 (KGAAETLKLN…LFVIVYILLV (161 aa)). Residues 393-409 (IAIGVAIHSVSHLACDF) form a helical membrane-spanning segment. Residues 410 to 444 (PLLIAATPAEYMPLGKFFGEEQPKRYLHFVKSTEG) are Cytoplasmic-facing. Residues 445 to 465 (ITGLVMVFLMVIAFTLAMPWF) form a helical membrane-spanning segment. At 466–489 (RRGKLEKKLPGPLKKLASFNAFWY) the chain is on the extracellular side. The helical transmembrane segment at 490–510 (THHLFVIVYILLVLHGYYIYL) threads the bilayer. Residues 511–518 (NKEWYKKT) are Cytoplasmic-facing. The helical transmembrane segment at 519 to 536 (TWMYLAVPVALYAYERLI) threads the bilayer. Over 537–659 (RAFRSSIRTV…PYGAPAQDYK (123 aa)) the chain is Extracellular. The FAD-binding FR-type domain maps to 541–657 (SSIRTVKVLK…DGPYGAPAQD (117 aa)). Residues 660 to 680 (KYEVVLLIGLGIGATPMISII) traverse the membrane as a helical segment. Topologically, residues 681 to 849 (KDIINNTETK…TRFSFHKENF (169 aa)) are cytoplasmic.

The protein belongs to the RBOH (TC 5.B.1.3) family. In terms of assembly, monomer and homodimer.

It is found in the membrane. Its function is as follows. Calcium-dependent NADPH oxidase that generates superoxide. The polypeptide is Putative respiratory burst oxidase homolog protein G (RBOHG) (Arabidopsis thaliana (Mouse-ear cress)).